The chain runs to 137 residues: Large ribosomal subunit protein uL16 (137 aa).

This sequence belongs to the universal ribosomal protein uL16 family. In terms of assembly, part of the 50S ribosomal subunit.

Functionally, binds 23S rRNA and is also seen to make contacts with the A and possibly P site tRNAs. This is Large ribosomal subunit protein uL16 from Hydrogenovibrio crunogenus (strain DSM 25203 / XCL-2) (Thiomicrospira crunogena).